Here is a 373-residue protein sequence, read N- to C-terminus: Putative F-box/kelch-repeat protein At2g41360 (373 aa).

The F-box domain maps to 8–54 (WSSLSCLPDEMVLNCLARVPRRYYENISCVSVRLRSLVRTPELYRMR). Kelch repeat units lie at residues 116-162 (EIYF…VFDG) and 163-208 (KIHV…MVSS).

In Arabidopsis thaliana (Mouse-ear cress), this protein is Putative F-box/kelch-repeat protein At2g41360.